Reading from the N-terminus, the 276-residue chain is MPELPEVENVRRTLENLVTGKTIEDVIVTYPKIVKRPDDAEIFKEMLKGETIENIKRRGKFLLLYVTNYVIVSHLRMEGKFLLHQEDEPIDKHTHVRFLFTDGTELHYKDVRKFGTMHLFKKGEEMNQMPLADLGPEPFDAELTPQYLHERLQKTNRKIKVVLLDQRLLVGLGNIYVDEVLFRSQIHPEREASSLTAEEIERIYEATVTTLGEAVKRGGSTIRTYINSQGQIGSFQELLNVYGKKGEPCVTCGTILEKTVVGGRGTHYCPICQPRI.

Catalysis depends on Pro2, which acts as the Schiff-base intermediate with DNA. Residue Glu3 is the Proton donor of the active site. Lys60 serves as the catalytic Proton donor; for beta-elimination activity. Residues His93 and Arg112 each contribute to the DNA site. The segment at 240 to 274 adopts an FPG-type zinc-finger fold; the sequence is NVYGKKGEPCVTCGTILEKTVVGGRGTHYCPICQP. Residue Arg264 is the Proton donor; for delta-elimination activity of the active site.

It belongs to the FPG family. In terms of assembly, monomer. Zn(2+) serves as cofactor.

It catalyses the reaction Hydrolysis of DNA containing ring-opened 7-methylguanine residues, releasing 2,6-diamino-4-hydroxy-5-(N-methyl)formamidopyrimidine.. The catalysed reaction is 2'-deoxyribonucleotide-(2'-deoxyribose 5'-phosphate)-2'-deoxyribonucleotide-DNA = a 3'-end 2'-deoxyribonucleotide-(2,3-dehydro-2,3-deoxyribose 5'-phosphate)-DNA + a 5'-end 5'-phospho-2'-deoxyribonucleoside-DNA + H(+). Involved in base excision repair of DNA damaged by oxidation or by mutagenic agents. Acts as a DNA glycosylase that recognizes and removes damaged bases. Has a preference for oxidized purines, such as 7,8-dihydro-8-oxoguanine (8-oxoG). Has AP (apurinic/apyrimidinic) lyase activity and introduces nicks in the DNA strand. Cleaves the DNA backbone by beta-delta elimination to generate a single-strand break at the site of the removed base with both 3'- and 5'-phosphates. This chain is Formamidopyrimidine-DNA glycosylase, found in Bacillus anthracis.